Consider the following 564-residue polypeptide: 4-coumarate--CoA ligase 1 (564 aa).

6 residues coordinate ATP: Ser-209, Ser-210, Gly-211, Thr-212, Thr-213, and Lys-217. Residues Tyr-259 and Thr-263 each contribute to the (E)-4-coumaroyl-AMP site. CoA is bound at residue Arg-280. An SBD1 region spans residues 282–351; it reads DLAAMMDLVE…AKLPGAVLGQ (70 aa). (E)-4-coumaroyl-AMP is bound by residues Ala-329, Gln-351, Gly-352, Thr-356, and Met-364. Residues Gln-351, Gly-352, and Thr-356 each contribute to the ATP site. The SBD2 stretch occupies residues 352–419; the sequence is GYGMTEAGPV…IRGQQIMKGY (68 aa). Residues Asp-440 and Arg-455 each contribute to the ATP site. (E)-4-coumaroyl-AMP is bound by residues Lys-457 and Lys-461. CoA-binding residues include Arg-463 and Gly-464. Lys-547 lines the ATP pocket.

It belongs to the ATP-dependent AMP-binding enzyme family. Mg(2+) is required as a cofactor. In terms of tissue distribution, expressed in roots, stems, leaf blades and leaf sheaths.

It catalyses the reaction (E)-ferulate + ATP + CoA = (E)-feruloyl-CoA + AMP + diphosphate. It carries out the reaction (E)-4-coumarate + ATP + CoA = (E)-4-coumaroyl-CoA + AMP + diphosphate. The enzyme catalyses (E)-cinnamate + ATP + CoA = (E)-cinnamoyl-CoA + AMP + diphosphate. The catalysed reaction is (E)-caffeate + ATP + CoA = (E)-caffeoyl-CoA + AMP + diphosphate. It catalyses the reaction (E)-ferulate + ATP + H(+) = (E)-feruloyl-AMP + diphosphate. It carries out the reaction (E)-feruloyl-AMP + CoA = (E)-feruloyl-CoA + AMP + H(+). The enzyme catalyses (E)-4-coumarate + ATP + H(+) = (E)-4-coumaroyl-AMP + diphosphate. The catalysed reaction is (E)-4-coumaroyl-AMP + CoA = (E)-4-coumaroyl-CoA + AMP + H(+). It catalyses the reaction (E)-caffeate + ATP + H(+) = (E)-caffeoyl-AMP + diphosphate. It carries out the reaction (E)-caffeoyl-AMP + CoA = (E)-caffeoyl-CoA + AMP + H(+). The protein operates within phytoalexin biosynthesis; 3,4',5-trihydroxystilbene biosynthesis; 3,4',5-trihydroxystilbene from trans-4-coumarate: step 1/2. In terms of biological role, involved in the phenylpropanoid metabolism by mediating the activation of a number of hydroxycinnamates for the biosynthesis of monolignols and other phenolic secondary metabolites. Catalyzes the formation of CoA esters of cinnamate, 4-coumarate, caffeate and ferulate. Is more efficient with substrates in the following order: ferulate &gt; 4-coumarate &gt; cinnamate &gt; caffeate. Cannot convert sinapate to its corresponding CoA ester. Follows a two-step reaction mechanism, wherein the carboxylate substrate first undergoes adenylation by ATP, followed by a thioesterification in the presence of CoA to yield the final CoA thioester. This chain is 4-coumarate--CoA ligase 1, found in Oryza sativa subsp. japonica (Rice).